The chain runs to 130 residues: Small ribosomal subunit protein uS8 (130 aa).

Belongs to the universal ribosomal protein uS8 family. In terms of assembly, part of the 30S ribosomal subunit. Contacts proteins S5 and S12.

Functionally, one of the primary rRNA binding proteins, it binds directly to 16S rRNA central domain where it helps coordinate assembly of the platform of the 30S subunit. This Buchnera aphidicola subsp. Baizongia pistaciae (strain Bp) protein is Small ribosomal subunit protein uS8.